The chain runs to 399 residues: Acetate kinase (399 aa).

N7 serves as a coordination point for Mg(2+). Position 14 (K14) interacts with ATP. R90 contacts substrate. D147 acts as the Proton donor/acceptor in catalysis. ATP-binding positions include 207-211, 282-284, and 330-334; these read HLGNG, DFR, and GIGEN. Mg(2+) is bound at residue E385.

The protein belongs to the acetokinase family. Homodimer. The cofactor is Mg(2+). Requires Mn(2+) as cofactor.

It localises to the cytoplasm. It catalyses the reaction acetate + ATP = acetyl phosphate + ADP. Its pathway is metabolic intermediate biosynthesis; acetyl-CoA biosynthesis; acetyl-CoA from acetate: step 1/2. Functionally, catalyzes the formation of acetyl phosphate from acetate and ATP. Can also catalyze the reverse reaction. This is Acetate kinase from Caldicellulosiruptor saccharolyticus (strain ATCC 43494 / DSM 8903 / Tp8T 6331).